The following is a 548-amino-acid chain: Chaperonin GroEL (548 aa).

ATP is bound by residues T30–P33, K51, D87–T91, G415, and D496. The tract at residues S527–F548 is disordered. Residues G538–F548 show a composition bias toward gly residues.

The protein belongs to the chaperonin (HSP60) family. As to quaternary structure, forms a cylinder of 14 subunits composed of two heptameric rings stacked back-to-back. Interacts with the co-chaperonin GroES.

It localises to the cytoplasm. It carries out the reaction ATP + H2O + a folded polypeptide = ADP + phosphate + an unfolded polypeptide.. Its function is as follows. Together with its co-chaperonin GroES, plays an essential role in assisting protein folding. The GroEL-GroES system forms a nano-cage that allows encapsulation of the non-native substrate proteins and provides a physical environment optimized to promote and accelerate protein folding. The protein is Chaperonin GroEL of Rickettsia akari (strain Hartford).